The chain runs to 305 residues: Sulfate adenylyltransferase subunit 2 (305 aa).

Belongs to the PAPS reductase family. CysD subfamily. As to quaternary structure, heterodimer composed of CysD, the smaller subunit, and CysN.

It catalyses the reaction sulfate + ATP + H(+) = adenosine 5'-phosphosulfate + diphosphate. It functions in the pathway sulfur metabolism; hydrogen sulfide biosynthesis; sulfite from sulfate: step 1/3. With CysN forms the ATP sulfurylase (ATPS) that catalyzes the adenylation of sulfate producing adenosine 5'-phosphosulfate (APS) and diphosphate, the first enzymatic step in sulfur assimilation pathway. APS synthesis involves the formation of a high-energy phosphoric-sulfuric acid anhydride bond driven by GTP hydrolysis by CysN coupled to ATP hydrolysis by CysD. The polypeptide is Sulfate adenylyltransferase subunit 2 (Pseudomonas putida (strain ATCC 700007 / DSM 6899 / JCM 31910 / BCRC 17059 / LMG 24140 / F1)).